The sequence spans 107 residues: MVASCHTLTIIPKEARSNCYRAYSRASCWCCLRTDNVRMCRRPPQNLLASVQRSRLRRKGPINGNQGSAIPTQSADCGLQHPYLWTRNPTPRGLSRLAASVPTAPEP.

Disordered regions lie at residues 51 to 75 (VQRSRLRRKGPINGNQGSAIPTQSA) and 88 to 107 (NPTPRGLSRLAASVPTAPEP). A compositionally biased stretch (polar residues) spans 63-75 (NGNQGSAIPTQSA).

This is an uncharacterized protein from Fowl adenovirus A serotype 1 (strain CELO / Phelps) (FAdV-1).